The chain runs to 1299 residues: DNA-directed RNA polymerase subunit beta' (1299 aa).

The Zn(2+) site is built by cysteine 60, cysteine 62, cysteine 75, and cysteine 78. The Mg(2+) site is built by aspartate 535, aspartate 537, and aspartate 539. Zn(2+)-binding residues include cysteine 877, cysteine 954, cysteine 961, and cysteine 964.

The protein belongs to the RNA polymerase beta' chain family. The RNAP catalytic core consists of 2 alpha, 1 beta, 1 beta' and 1 omega subunit. When a sigma factor is associated with the core the holoenzyme is formed, which can initiate transcription. Requires Mg(2+) as cofactor. The cofactor is Zn(2+).

The enzyme catalyses RNA(n) + a ribonucleoside 5'-triphosphate = RNA(n+1) + diphosphate. Its function is as follows. DNA-dependent RNA polymerase catalyzes the transcription of DNA into RNA using the four ribonucleoside triphosphates as substrates. This chain is DNA-directed RNA polymerase subunit beta', found in Pseudarthrobacter chlorophenolicus (strain ATCC 700700 / DSM 12829 / CIP 107037 / JCM 12360 / KCTC 9906 / NCIMB 13794 / A6) (Arthrobacter chlorophenolicus).